The following is a 487-amino-acid chain: Adenosylhomocysteinase (487 aa).

Threonine 76, aspartate 151, and glutamate 212 together coordinate substrate. 213–215 contributes to the NAD(+) binding site; the sequence is TTT. Lysine 242 and aspartate 246 together coordinate substrate. Residues asparagine 247, 276 to 281, glutamate 299, asparagine 334, 355 to 357, and asparagine 403 contribute to the NAD(+) site; these read GYGDVG and IGH.

Belongs to the adenosylhomocysteinase family. NAD(+) is required as a cofactor.

Its subcellular location is the cytoplasm. It carries out the reaction S-adenosyl-L-homocysteine + H2O = L-homocysteine + adenosine. The protein operates within amino-acid biosynthesis; L-homocysteine biosynthesis; L-homocysteine from S-adenosyl-L-homocysteine: step 1/1. May play a key role in the regulation of the intracellular concentration of adenosylhomocysteine. The polypeptide is Adenosylhomocysteinase (Bacteroides fragilis (strain YCH46)).